A 340-amino-acid polypeptide reads, in one-letter code: MSATLINVDDGDAMEPTLQSILDQRSLRWIFVGGKGGVGKTTTSCSLAIQLAKVRRSVLLISTDPAHNLSDAFSQKFGKEARLIDGFENLSAMEIDPNGSIQDLLAGQGEGDAGADMGGMGGMMQDLAFAIPGIDEAMSFAEVLKQVKSLSYETIIFDTAPTGHTLRFLQFPSVLEKALAKVSQLSNQYGPLLNGFLGSNGTLPNGQNLNEMMEKLETLRATISEVNTQFKDERLTTFVCVCIPEFLSLYETERMIQELASYGIDTHSIVVNQLLFPKPGSDCEQCTARRRMQKKYLEQIEELYDEFNVVKMPLLVEEVRGKERLERFSEMLVTPFVPPS.

Position 35–42 (35–42 (KGGVGKTT)) interacts with ATP. Residue Asp-64 is part of the active site. Residues Glu-245 and Asn-272 each coordinate ATP. Residues Cys-283 and Cys-286 each contribute to the Zn(2+) site.

It belongs to the arsA ATPase family. Homodimer.

It localises to the cytoplasm. Its subcellular location is the endoplasmic reticulum. ATPase required for the post-translational delivery of tail-anchored (TA) proteins to the endoplasmic reticulum. Recognizes and selectively binds the transmembrane domain of TA proteins in the cytosol. This complex then targets to the endoplasmic reticulum by membrane-bound receptors, where the tail-anchored protein is released for insertion. This process is regulated by ATP binding and hydrolysis. ATP binding drives the homodimer towards the closed dimer state, facilitating recognition of newly synthesized TA membrane proteins. ATP hydrolysis is required for insertion. Subsequently, the homodimer reverts towards the open dimer state, lowering its affinity for the membrane-bound receptor, and returning it to the cytosol to initiate a new round of targeting. The chain is ATPase GET3 from Chaetomium globosum (strain ATCC 6205 / CBS 148.51 / DSM 1962 / NBRC 6347 / NRRL 1970) (Soil fungus).